A 208-amino-acid polypeptide reads, in one-letter code: mRNA 3'-end-processing protein YTH1 (208 aa).

5 consecutive C3H1-type zinc fingers follow at residues aspartate 28–proline 59, phenylalanine 61–asparagine 88, leucine 89–proline 117, alanine 118–lysine 145, and phenylalanine 147–phenylalanine 170.

The protein belongs to the CPSF4/YTH1 family. Component of the cleavage and polyadenylation factor (CPF) complex, which is composed of at least PTI1, SYC1, SSU72, GLC7, MPE1, REF2, PFS2, PTA1, YSH1/BRR5, SWD2, CFT2/YDH1, YTH1, CFT1/YHH1, FIP1 and PAP1. Interacts with FIP1 and YSH1.

It is found in the nucleus. In terms of biological role, RNA-binding component of the cleavage and polyadenylation factor (CPF) complex, which plays a key role in polyadenylation-dependent pre-mRNA 3'-end formation and cooperates with cleavage factors including the CFIA complex and NAB4/CFIB. In Saccharomyces cerevisiae (strain ATCC 204508 / S288c) (Baker's yeast), this protein is mRNA 3'-end-processing protein YTH1 (YTH1).